We begin with the raw amino-acid sequence, 345 residues long: Leucine-rich repeat-containing protein 69 (345 aa).

LRR repeat units lie at residues 13-34 (KAKT…VGCL), 36-58 (SLTE…SALC), 59-80 (RLRV…IKYL), 82-103 (CLER…ALDG), 106-127 (NLLF…IYKL), 129-151 (SLET…CFLQ), 152-173 (NLQE…LSYL), 175-196 (NLKE…ICKL), 198-219 (KLKI…MHRV), and 220-241 (PLTE…FARQ).

Belongs to the LRRC69 family.

This Xenopus laevis (African clawed frog) protein is Leucine-rich repeat-containing protein 69 (lrrc69).